The following is a 355-amino-acid chain: D-alanine--D-alanine ligase (355 aa).

Residues 143 to 350 enclose the ATP-grasp domain; sequence KTIFSNLKIP…IEQLVAKLVD (208 aa). Residue 178–233 participates in ATP binding; sequence IKKLNFPVFVKPSNSGSSLGISKVINKSALLKALEKAWEIDARILVEEGLETREIE. Mg(2+) contacts are provided by D303, E317, and N319.

The protein belongs to the D-alanine--D-alanine ligase family. Mg(2+) serves as cofactor. Mn(2+) is required as a cofactor.

The protein resides in the cytoplasm. It catalyses the reaction 2 D-alanine + ATP = D-alanyl-D-alanine + ADP + phosphate + H(+). It functions in the pathway cell wall biogenesis; peptidoglycan biosynthesis. Its function is as follows. Cell wall formation. The sequence is that of D-alanine--D-alanine ligase from Prochlorococcus marinus (strain MIT 9312).